The sequence spans 1464 residues: Nuclear pore complex protein NUP155 (1464 aa).

At S2 the chain carries N-acetylserine.

It belongs to the non-repetitive/WGA-negative nucleoporin family. In terms of assembly, part of the nuclear pore complex (NPC). The NPC has an eight-fold symmetrical structure comprising a central transport channel and two rings, the cytoplasmic and nuclear rings, to which eight filaments are attached. The cytoplasmic filaments have loose ends, while the nuclear filaments are joined in a distal ring, forming a nuclear basket. NPCs are highly dynamic in configuration and composition, and can be devided in 3 subcomplexes, the NUP62 subcomplex, the NUP107-160 subcomplex and the NUP93 subcomplex, containing approximately 30 different nucleoporin proteins.

It is found in the nucleus. The protein resides in the nuclear pore complex. Its function is as follows. Major component of the nuclear pore complex (NPC). The chain is Nuclear pore complex protein NUP155 from Arabidopsis thaliana (Mouse-ear cress).